Here is a 98-residue protein sequence, read N- to C-terminus: Cystatin-B (98 aa).

An N-acetylmethionine modification is found at Met1. Residues 46-50 (QIVAG) carry the Secondary area of contact motif.

It belongs to the cystatin family. Widely expressed. Highest expression in heart, liver and kidney. Lower levels in brain, lung and skeletal muscle. Lowest levels in spleen and testis.

The protein resides in the cytoplasm. In terms of biological role, this is an intracellular thiol proteinase inhibitor. The polypeptide is Cystatin-B (Cstb) (Mus musculus (Mouse)).